The primary structure comprises 532 residues: MAAIYLLIAALIASSHALAAHGAGGGVPLAAAAPLPFPGDLAASGKLRTDPNATVPASMDFGNITAALPAAVLFPGSPGDVAELLRAAYAAPGRPFTVSFRGRGHSTMGQALAAGGVVVHMQSMGGGGAPRINVSADGAYVDAGGEQLWVDVLRAALARGVAPRSWTDYLHLTVGGTLSNAGVSGQTYRHGPQISNVLELDVITGHGETVTCSKAVNSDLFDAVLGGLGQFGVITRARVAVEPAPARARWVRLVYADFAAFSADQERLVAARPDGSHGPWSYVEGAVYLAGRGLAVALKSSGGFFSDADAARVVALAAARNATAVYSIEATLNYAANATPSSVDAAVAAALGDLHFEEGFSFSRDVTYEEFLDRVYGEEEALEKAGLWRVPHPWLNLFVPGSRIADFDRGVFKGILQTATDIAGPLIIYPVNKSKWDAAMSAVTPEGEEEVFYVVSLLFSAVANDVAALEAQNRRILRFCDLAGIGYKAYLAHYDSRGDWVRHFGAKWDRFVQRKDKYDPKKLLSPGQDIFN.

The signal sequence occupies residues 1–17; sequence MAAIYLLIAALIASSHA. 2 N-linked (GlcNAc...) asparagine glycosylation sites follow: Asn52 and Asn63. An FAD-binding PCMH-type domain is found at 65 to 244; sequence TAALPAAVLF…TRARVAVEPA (180 aa). Positions 100, 102, 103, and 104 each coordinate FAD. At His105 the chain carries Pros-8alpha-FAD histidine. Residues Ser106 and Gln110 each contribute to the FAD site. Asn133 carries N-linked (GlcNAc...) asparagine glycosylation. 5 residues coordinate FAD: Asp168, Thr173, Ser179, Val183, and Ile234. N-linked (GlcNAc...) asparagine glycosylation is found at Asn321 and Asn432. FAD is bound by residues Tyr490, Ser525, and Gln528.

Belongs to the oxygen-dependent FAD-linked oxidoreductase family. In terms of assembly, monomer. The cofactor is FAD.

It is found in the secreted. Its subcellular location is the extracellular space. It carries out the reaction N(6)-dimethylallyladenine + A + H2O = 3-methyl-2-butenal + adenine + AH2. In terms of biological role, catalyzes the oxidation of cytokinins, a family of N(6)-substituted adenine derivatives that are plant hormones, where the substituent is an isopentenyl group. This is Cytokinin dehydrogenase 1 (CKX1) from Oryza sativa subsp. japonica (Rice).